The following is a 177-amino-acid chain: Large ribosomal subunit protein uL6 (177 aa).

The protein belongs to the universal ribosomal protein uL6 family. Part of the 50S ribosomal subunit.

Its function is as follows. This protein binds to the 23S rRNA, and is important in its secondary structure. It is located near the subunit interface in the base of the L7/L12 stalk, and near the tRNA binding site of the peptidyltransferase center. The chain is Large ribosomal subunit protein uL6 from Cupriavidus pinatubonensis (strain JMP 134 / LMG 1197) (Cupriavidus necator (strain JMP 134)).